Consider the following 318-residue polypeptide: Pyrroline-5-carboxylate reductase ucsG (318 aa).

Belongs to the pyrroline-5-carboxylate reductase family.

The protein operates within mycotoxin biosynthesis. Pyrroline-5-carboxylate reductase; part of the gene cluster that mediates the biosynthesis of UCS1025A, a member of the pyrrolizidinone family that acts as a strong telomerase inhibitor and displays potent antibacterial and antitumor properties. These compounds share a hemiaminal-containing pyrrolizidinone core fused with a gamma-lactone, giving a furopyrrolizidine that is connected to a decalin fragment. The polyketide synthase module (PKS) of the PKS-NRPS ucsA is responsible for the synthesis of the polyketide backbone via the condensation of an acetyl-CoA starter unit with 6 malonyl-CoA units. The downstream nonribosomal peptide synthetase (NRPS) module then amidates the carboxyl end of the polyketide with a 2S,3S-methylproline derived from L-isoleucine by the 2-oxoglutarate-dependent dioxygenase ucsF which converts L-isoleucine to (4S,5S)-4-methylpyrroline-5-carboxylate that is further converted to 2S,3S-methylproline by the pyrroline-5-carboxylate reductase ucsG. Reductive release of the completed aminoacyl polyketide from the assembly line can form the 3-pyrrolin-2-one structure via an intramolecular Knoevenagel reaction. Because ucsA lacks a designated enoylreductase (ER) domain, the required activity is provided the enoyl reductase ucsL. This keto acyclic precursor is the substrate of the Diels-Alderase ucsH, that catalyzes the Diels-Alder cycloaddition. Oxidation of the 3S-methyl group to a carboxylate by the cytochrome P450 monooxygenase ucsK allows an oxa-Michael cyclization that might involve the reductase/dehydrogenase ucsI and which furnishes the furopyrrolizidine. The oxidase ucsJ likely plays a critical role in stereoselective reduction of the C5-C6 double bond to afford the required R-configured carboxylate group. Further enolization and oxidation at C5 by an unidentified enzyme affords the last intermediate that can undergo oxa-Michael cyclization to yield UCS1025A. The protein is Pyrroline-5-carboxylate reductase ucsG of Acremonium sp.